Here is a 142-residue protein sequence, read N- to C-terminus: Gonadotropin subunit beta-2 (142 aa).

The N-terminal stretch at 1–24 is a signal peptide; sequence MLGLHVGTLMISLFLCILLEPVEG. 6 disulfide bridges follow: Cys-30–Cys-78, Cys-44–Cys-93, Cys-47–Cys-131, Cys-55–Cys-109, Cys-59–Cys-111, and Cys-114–Cys-121. N-linked (GlcNAc...) asparagine glycosylation occurs at Asn-34.

The protein belongs to the glycoprotein hormones subunit beta family. As to quaternary structure, heterodimer of an alpha and a beta chain.

Its subcellular location is the secreted. In terms of biological role, involved in gametogenesis and steroidogenesis. This Coregonus autumnalis (Arctic cisco) protein is Gonadotropin subunit beta-2 (cgbb).